We begin with the raw amino-acid sequence, 211 residues long: Thymidylate kinase (211 aa).

10–17 (GVEGCGKT) provides a ligand contact to ATP.

The protein belongs to the thymidylate kinase family.

It catalyses the reaction dTMP + ATP = dTDP + ADP. In terms of biological role, phosphorylation of dTMP to form dTDP in both de novo and salvage pathways of dTTP synthesis. The protein is Thymidylate kinase of Nostoc punctiforme (strain ATCC 29133 / PCC 73102).